The following is a 370-amino-acid chain: D-alanine--D-alanine ligase (370 aa).

In terms of domain architecture, ATP-grasp spans 144 to 352 (KKIFADAGIP…YGALIERLVD (209 aa)). ATP is bound at residue 177-232 (EEVLTYPVFVKPANLGSSVGISKATNKTELIEAMTEAFLYDRRVVVEQGVVAREIE). Residues Asp-306, Glu-319, and Asn-321 each coordinate Mg(2+).

Belongs to the D-alanine--D-alanine ligase family. Mg(2+) is required as a cofactor. It depends on Mn(2+) as a cofactor.

Its subcellular location is the cytoplasm. It catalyses the reaction 2 D-alanine + ATP = D-alanyl-D-alanine + ADP + phosphate + H(+). The protein operates within cell wall biogenesis; peptidoglycan biosynthesis. Cell wall formation. This Listeria innocua serovar 6a (strain ATCC BAA-680 / CLIP 11262) protein is D-alanine--D-alanine ligase.